A 340-amino-acid chain; its full sequence is Ferrochelatase (340 aa).

2 residues coordinate Fe cation: His189 and Glu292.

It belongs to the ferrochelatase family.

It localises to the cytoplasm. The catalysed reaction is heme b + 2 H(+) = protoporphyrin IX + Fe(2+). It participates in porphyrin-containing compound metabolism; protoheme biosynthesis; protoheme from protoporphyrin-IX: step 1/1. Functionally, catalyzes the ferrous insertion into protoporphyrin IX. The sequence is that of Ferrochelatase from Pseudomonas aeruginosa (strain UCBPP-PA14).